Here is a 520-residue protein sequence, read N- to C-terminus: GMP synthase [glutamine-hydrolyzing] (520 aa).

The Glutamine amidotransferase type-1 domain occupies 9–202; it reads KILILDFGSQ…VRKICGCSGK (194 aa). The active-site Nucleophile is the cysteine 86. Active-site residues include histidine 176 and glutamate 178. One can recognise a GMPS ATP-PPase domain in the interval 203–395; sequence WTPGQIIEDA…LGLPHQMVWR (193 aa). 230–236 contributes to the ATP binding site; the sequence is SGGVDSS.

As to quaternary structure, homodimer.

It catalyses the reaction XMP + L-glutamine + ATP + H2O = GMP + L-glutamate + AMP + diphosphate + 2 H(+). It participates in purine metabolism; GMP biosynthesis; GMP from XMP (L-Gln route): step 1/1. Functionally, catalyzes the synthesis of GMP from XMP. The protein is GMP synthase [glutamine-hydrolyzing] of Geotalea daltonii (strain DSM 22248 / JCM 15807 / FRC-32) (Geobacter daltonii).